A 510-amino-acid chain; its full sequence is MLRRALLCLAVAAAPGLYADAPEEEDHVLVLRKSNFAEALAAHKYLLVEFYAPWCGHCKALAPEYAKAAGKLKAEGSEIRLAKVDATEESDLAQQYGVRGYPTIKFFRNGDTASPKEYTAGREADDIVNWLKKRTGPAATTLPDGAAAESLVESSEVAVIGFFKDVESDSAKQFLQAAEAIDDIPFGITSNSDVFSKYQLDKDGVVLFKKFDEGRNNFEGEVTKENLLDFIKYNQLPLVIEFTEQTAPKIFGGEIKTHILLFLPKSVSDYDGKLSNFKTAAESFKGKILFIFIDSDHTDNQRILEFFGLKKEECPAVRLITLEEEMTKYKPESDELTAERITEFCHRFLEGKIKPHLMSQELPEDWDKQPVKVLVGKNFEEVAFDENKNVFVEFYAPWCGHCKQLAPIWDKLGETYKDHENIVIAKMDSTANEVEAIKVHSFPTLKFFPASVDRTVIDYNGERTLDGFKKFLESGGQDGAGDDDDLEDLEEAEEPDMEEDDDQKAVKDEL.

Positions 1 to 19 (MLRRALLCLAVAAAPGLYA) are cleaved as a signal peptide. One can recognise a Thioredoxin 1 domain in the interval 20–136 (DAPEEEDHVL…IVNWLKKRTG (117 aa)). Residues Cys55 and Cys58 each act as nucleophile in the active site. A disulfide bridge links Cys55 with Cys58. N6-acetyllysine is present on Lys202. N6-succinyllysine is present on residues Lys224 and Lys273. 2 positions are modified to phosphoserine: Ser333 and Ser359. Residues 351–477 (GKIKPHLMSQ…FKKFLESGGQ (127 aa)) enclose the Thioredoxin 2 domain. Residues Cys399 and Cys402 each act as nucleophile in the active site. Cys399 and Cys402 are disulfide-bonded. The residue at position 429 (Ser429) is a Phosphoserine. The tract at residues 473-510 (ESGGQDGAGDDDDLEDLEEAEEPDMEEDDDQKAVKDEL) is disordered. Over residues 480-502 (AGDDDDLEDLEEAEEPDMEEDDD) the composition is skewed to acidic residues. A Prevents secretion from ER motif is present at residues 507–510 (KDEL).

Belongs to the protein disulfide isomerase family. As to quaternary structure, heterodimer; heterodimerizes with the protein microsomal triglyceride transfer MTTP. Homodimer. Homodimer. Monomers and homotetramers may also occur. Interacts with P4HA2, forming a heterotetramer consisting of 2 alpha subunits (P4HA2) and 2 beta (P4HB), where P4HB plays the role of a structural subunit; this tetramer catalyzes the formation of 4-hydroxyproline in collagen. Also constitutes the structural subunit of the microsomal triacylglycerol transfer protein MTTP in mammalian cells. Stabilizes both enzymes and retain them in the ER without contributing to the catalytic activity. Binds UBQLN1. Interacts with ERO1B. Interacts with ILDR2. Interacts with ERN1/IRE1A (via N-terminus); the interaction is enhanced by phosphorylation of P4HB by FAM20C in response to endoplasmic reticulum stress and results in attenuation of ERN1 activity. Post-translationally, phosphorylation of Ser-359 by FAM20C is induced by endoplasmic reticulum stress and results in a functional switch from oxidoreductase to molecular chaperone. It also promotes interaction with ERN1.

The protein localises to the endoplasmic reticulum. The protein resides in the endoplasmic reticulum lumen. It localises to the melanosome. It is found in the cell membrane. It carries out the reaction Catalyzes the rearrangement of -S-S- bonds in proteins.. This multifunctional protein catalyzes the formation, breakage and rearrangement of disulfide bonds. At the cell surface, seems to act as a reductase that cleaves disulfide bonds of proteins attached to the cell. May therefore cause structural modifications of exofacial proteins. Inside the cell, seems to form/rearrange disulfide bonds of nascent proteins. At high concentrations and following phosphorylation by FAM20C, functions as a chaperone that inhibits aggregation of misfolded proteins. At low concentrations, facilitates aggregation (anti-chaperone activity). May be involved with other chaperones in the structural modification of the TG precursor in hormone biogenesis. Also acts as a structural subunit of various enzymes such as prolyl 4-hydroxylase and microsomal triacylglycerol transfer protein MTTP. Receptor for LGALS9; the interaction retains P4HB at the cell surface of Th2 T helper cells, increasing disulfide reductase activity at the plasma membrane, altering the plasma membrane redox state and enhancing cell migration. The chain is Protein disulfide-isomerase (P4HB) from Macaca fuscata fuscata (Japanese macaque).